Consider the following 430-residue polypeptide: Enolase (430 aa).

(2R)-2-phosphoglycerate is bound at residue Gln-167. The active-site Proton donor is Glu-209. 3 residues coordinate Mg(2+): Asp-246, Glu-287, and Asp-314. 3 residues coordinate (2R)-2-phosphoglycerate: Lys-339, Arg-368, and Ser-369. Lys-339 acts as the Proton acceptor in catalysis.

The protein belongs to the enolase family. Mg(2+) serves as cofactor.

The protein localises to the cytoplasm. Its subcellular location is the secreted. It localises to the cell surface. The catalysed reaction is (2R)-2-phosphoglycerate = phosphoenolpyruvate + H2O. Its pathway is carbohydrate degradation; glycolysis; pyruvate from D-glyceraldehyde 3-phosphate: step 4/5. In terms of biological role, catalyzes the reversible conversion of 2-phosphoglycerate (2-PG) into phosphoenolpyruvate (PEP). It is essential for the degradation of carbohydrates via glycolysis. The sequence is that of Enolase from Synechococcus sp. (strain ATCC 27144 / PCC 6301 / SAUG 1402/1) (Anacystis nidulans).